A 126-amino-acid polypeptide reads, in one-letter code: Glycine cleavage system H protein (126 aa).

The Lipoyl-binding domain occupies 22–104 (IAYVGITDYA…YGKGWLIKIK (83 aa)). Lysine 63 is subject to N6-lipoyllysine.

This sequence belongs to the GcvH family. The glycine cleavage system is composed of four proteins: P, T, L and H. (R)-lipoate serves as cofactor.

The glycine cleavage system catalyzes the degradation of glycine. The H protein shuttles the methylamine group of glycine from the P protein to the T protein. The chain is Glycine cleavage system H protein from Phocaeicola vulgatus (strain ATCC 8482 / DSM 1447 / JCM 5826 / CCUG 4940 / NBRC 14291 / NCTC 11154) (Bacteroides vulgatus).